A 111-amino-acid chain; its full sequence is Cytochrome c (111 aa).

Residue alanine 1 is modified to N-acetylalanine. Cysteine 22, cysteine 25, and histidine 26 together coordinate heme c. Lysine 80 is subject to N6,N6,N6-trimethyllysine. Residue methionine 88 participates in heme c binding. Lysine 94 is subject to N6,N6,N6-trimethyllysine.

This sequence belongs to the cytochrome c family. Post-translationally, binds 1 heme c group covalently per subunit.

The protein resides in the mitochondrion intermembrane space. Functionally, electron carrier protein. The oxidized form of the cytochrome c heme group can accept an electron from the heme group of the cytochrome c1 subunit of cytochrome reductase. Cytochrome c then transfers this electron to the cytochrome oxidase complex, the final protein carrier in the mitochondrial electron-transport chain. In Guizotia abyssinica (Niger), this protein is Cytochrome c.